We begin with the raw amino-acid sequence, 340 residues long: Zinc finger protein 488 (340 aa).

The tract at residues 72 to 187 (AELALLVAPG…SVFPAGESAD (116 aa)) is important for transcriptional repression activity. Residues 77–180 (LVAPGKPRPG…AERPELTSVF (104 aa)) form a disordered region. A compositionally biased stretch (pro residues) spans 82 to 91 (KPRPGKPLPP). A compositionally biased stretch (basic and acidic residues) spans 106–125 (PRMKDRQVDAQAQEREHDDP). C2H2-type zinc fingers lie at residues 275-302 (NWCAKCNLSFRLTSDLVFHMRSHHKKEH) and 317-339 (LACPVCQEHFRERHHLSRHMTSH). The short motif at 298–305 (HKKEHAGP) is the Nuclear localization signal element.

Belongs to the krueppel C2H2-type zinc-finger protein family. As to quaternary structure, interacts with OLIG2.

It is found in the nucleus. Functionally, transcriptional repressor. Plays a role in oligodendrocyte differentiation, together with OLIG2. Mediates Notch signaling-activated formation of oligodendrocyte precursors. Promotes differentiation of adult neural stem progenitor cells (NSPCs) into mature oligodendrocytes and contributes to remyelination following nerve injury. The protein is Zinc finger protein 488 (ZNF488) of Homo sapiens (Human).